The following is a 278-amino-acid chain: Large ribosomal subunit protein uL2c (278 aa).

A disordered region spans residues 224-256 (NPVDHPHGGGEGRAPIGRKKPTTPWGYPALGRK).

Belongs to the universal ribosomal protein uL2 family. Part of the 50S ribosomal subunit.

The protein resides in the plastid. The polypeptide is Large ribosomal subunit protein uL2c (rpl2) (Cuscuta exaltata (Tall dodder)).